The sequence spans 32 residues: Delta-conotoxin-like CnVIB (32 aa).

3 disulfide bridges follow: cysteine 3-cysteine 18, cysteine 10-cysteine 22, and cysteine 17-cysteine 27. Residues proline 6 and proline 14 each carry the 4-hydroxyproline modification.

It belongs to the conotoxin O1 superfamily. Expressed by the venom duct.

It is found in the secreted. Functionally, delta-conotoxins bind to site 6 of voltage-gated sodium channels (Nav) and inhibit the inactivation process. This toxin acts on Nav1.4/SCN4A and Nav1.6/SCN8A (EC(50)=2.3 uM). The polypeptide is Delta-conotoxin-like CnVIB (Conus consors (Singed cone)).